A 57-amino-acid polypeptide reads, in one-letter code: MDDTLPKQMTPTDTSPLKEEQAHCNNKTLENQPKNINDNKCTDSQNTDLQNTEPSKV.

The tract at residues 1-57 (MDDTLPKQMTPTDTSPLKEEQAHCNNKTLENQPKNINDNKCTDSQNTDLQNTEPSKV) is disordered. Over residues 23–57 (HCNNKTLENQPKNINDNKCTDSQNTDLQNTEPSKV) the composition is skewed to polar residues.

This is an uncharacterized protein from Ornithodoros (relapsing fever ticks).